Consider the following 200-residue polypeptide: Large ribosomal subunit protein uL4 (200 aa).

Residues 38–68 (GRQGSKQQKTRSDVRGGGKRPWRQKGTGRAR) form a disordered region. Positions 54–65 (GGKRPWRQKGTG) are enriched in basic residues.

The protein belongs to the universal ribosomal protein uL4 family. In terms of assembly, part of the 50S ribosomal subunit.

In terms of biological role, one of the primary rRNA binding proteins, this protein initially binds near the 5'-end of the 23S rRNA. It is important during the early stages of 50S assembly. It makes multiple contacts with different domains of the 23S rRNA in the assembled 50S subunit and ribosome. Its function is as follows. Forms part of the polypeptide exit tunnel. The polypeptide is Large ribosomal subunit protein uL4 (Pseudomonas fluorescens (strain Pf0-1)).